Consider the following 129-residue polypeptide: MKSVQFCFLFCCWRVICCKSCELTNITITVEKEECRFCMSINATWCAGYCYTRDLVYKDPARPNNQKTCTFKELVYETVKVPGCAHQADSLYTYPVATECHCGKCDSDSTDCTVQGLGPSYCSFSEMKE.

The signal sequence occupies residues 1–18 (MKSVQFCFLFCCWRVICC). 6 cysteine pairs are disulfide-bonded: Cys21–Cys69, Cys35–Cys84, Cys38–Cys122, Cys46–Cys100, Cys50–Cys102, and Cys105–Cys112. N-linked (GlcNAc...) asparagine glycosylation is found at Asn25 and Asn42.

It belongs to the glycoprotein hormones subunit beta family. In terms of assembly, heterodimer. The active follitropin is a heterodimer composed of an alpha chain/CGA shared with other hormones and a unique beta chain/FSHB shown here.

It localises to the secreted. Together with the alpha chain CGA constitutes follitropin, the follicle-stimulating hormone, and provides its biological specificity to the hormone heterodimer. Binds FSHR, a G protein-coupled receptor, on target cells to activate downstream signaling pathways. Follitropin is involved in follicle development and spermatogenesis in reproductive organs. This chain is Follitropin subunit beta (FSHB), found in Panthera tigris altaica (Siberian tiger).